The sequence spans 554 residues: Inactive sesquithujene synthase (554 aa).

Asp308 and Asp312 together coordinate Mg(2+). Residues Asp308, Asp312, Arg449, and Asn452 each contribute to the substrate site. A DDXXD motif motif is present at residues 308–312 (DDMFD). Mg(2+) is bound by residues Asn452, Ser456, and Glu460.

This sequence belongs to the terpene synthase family. In terms of assembly, monomer. The cofactor is Mg(2+). It depends on Mn(2+) as a cofactor.

It localises to the cytoplasm. The protein operates within secondary metabolite biosynthesis; terpenoid biosynthesis. Non-functional sesquiterpene synthase having less than 1% of the activity found in cv. Delprim. The sequence is that of Inactive sesquithujene synthase from Zea mays (Maize).